Consider the following 277-residue polypeptide: Sulfur carrier protein FdhD (277 aa).

The active-site Cysteine persulfide intermediate is C121. 260-265 (FCKPGR) is a binding site for Mo-bis(molybdopterin guanine dinucleotide).

The protein belongs to the FdhD family.

Its subcellular location is the cytoplasm. Its function is as follows. Required for formate dehydrogenase (FDH) activity. Acts as a sulfur carrier protein that transfers sulfur from IscS to the molybdenum cofactor prior to its insertion into FDH. The protein is Sulfur carrier protein FdhD of Shigella flexneri serotype 5b (strain 8401).